A 162-amino-acid chain; its full sequence is Lipoprotein signal peptidase (162 aa).

Transmembrane regions (helical) follow at residues 66–86 (PFFI…FRKL) and 92–112 (LAAV…IDRV). Catalysis depends on residues aspartate 119 and aspartate 137. The helical transmembrane segment at 132 to 152 (AFNVADSAICVGVALLALDMI) threads the bilayer.

It belongs to the peptidase A8 family.

Its subcellular location is the cell inner membrane. It carries out the reaction Release of signal peptides from bacterial membrane prolipoproteins. Hydrolyzes -Xaa-Yaa-Zaa-|-(S,diacylglyceryl)Cys-, in which Xaa is hydrophobic (preferably Leu), and Yaa (Ala or Ser) and Zaa (Gly or Ala) have small, neutral side chains.. It participates in protein modification; lipoprotein biosynthesis (signal peptide cleavage). Functionally, this protein specifically catalyzes the removal of signal peptides from prolipoproteins. The sequence is that of Lipoprotein signal peptidase from Geobacter metallireducens (strain ATCC 53774 / DSM 7210 / GS-15).